The sequence spans 460 residues: NADH-ubiquinone oxidoreductase chain 4 (460 aa).

Transmembrane regions (helical) follow at residues Ser-20–Leu-42, Pro-61–Ser-81, Arg-94–Ala-113, Thr-114–Ile-134, Thr-148–Leu-168, Ile-195–Leu-215, Pro-225–Met-245, Leu-258–Leu-278, Ser-285–Ile-304, Trp-308–Leu-330, Met-351–Pro-371, Leu-380–Gly-400, and Leu-436–Trp-456.

This sequence belongs to the complex I subunit 4 family. In terms of assembly, core subunit of respiratory chain NADH dehydrogenase (Complex I) which is composed of 45 different subunits.

Its subcellular location is the mitochondrion inner membrane. The catalysed reaction is a ubiquinone + NADH + 5 H(+)(in) = a ubiquinol + NAD(+) + 4 H(+)(out). Core subunit of the mitochondrial membrane respiratory chain NADH dehydrogenase (Complex I) which catalyzes electron transfer from NADH through the respiratory chain, using ubiquinone as an electron acceptor. Essential for the catalytic activity and assembly of complex I. This is NADH-ubiquinone oxidoreductase chain 4 (mt-nd4) from Danio rerio (Zebrafish).